We begin with the raw amino-acid sequence, 2041 residues long: Fanconi anemia group M protein (2041 aa).

A disordered region spans residues 1–64 (MSGGRQRTLP…PNPGPGPEAA (64 aa)). The span at 48–60 (DPNPNVDPNPGPG) shows a compositional bias: pro residues. The 169-residue stretch at 91-259 (MARAALFANT…QVVSNLLIAQ (169 aa)) folds into the Helicase ATP-binding domain. An ATP-binding site is contributed by 104–111 (LPTGLGKT). Positions 207–210 (DEAH) match the DEAH box motif. Positions 447 to 631 (KLEEIVIEHF…HSPRMIPEGI (185 aa)) constitute a Helicase C-terminal domain. Over residues 802–814 (HLSTTSSAFAQKT) the composition is skewed to polar residues. Disordered regions lie at residues 802–822 (HLST…RDMA), 848–874 (TKTP…SEPC), 1070–1124 (KPAS…SEMK), 1158–1208 (LLRL…AWGR), 1301–1403 (STPL…ENLE), 1465–1491 (VSDV…SAAG), and 1685–1740 (DSSG…SAES). Residues 1170–1181 (PSAGPASQQPPS) are compositionally biased toward low complexity. The span at 1319-1329 (GTAGGRTGRGS) shows a compositional bias: gly residues. The span at 1375–1389 (VNPNSQRNSFGSSAS) shows a compositional bias: polar residues. Polar residues predominate over residues 1685–1697 (DSSGEETNVSNEK).

It belongs to the DEAD box helicase family. DEAH subfamily. FANCM sub-subfamily. In terms of assembly, component of the Fanconi anemia (FA) core complex. The FA core complex associates with Bloom syndrome (BLM) complex. This supercomplex between FA and BLM complexes has been called BRAFT. Post-translationally, phosphorylated; hyperphosphorylated in response to genotoxic stress.

The protein resides in the nucleus. The catalysed reaction is ATP + H2O = ADP + phosphate + H(+). In terms of biological role, DNA-dependent ATPase component of the Fanconi anemia (FA) core complex. Required for the normal activation of the FA pathway, leading to monoubiquitination of the FANCI-FANCD2 complex in response to DNA damage, cellular resistance to DNA cross-linking drugs, and prevention of chromosomal breakage. In complex with CENPS and CENPX, binds double-stranded DNA (dsDNA), fork-structured DNA (fsDNA) and Holliday junction substrates. Its ATP-dependent DNA branch migration activity can process branched DNA structures such as a movable replication fork. This activity is strongly stimulated in the presence of CENPS and CENPX. In complex with FAAP24, efficiently binds to single-strand DNA (ssDNA), splayed-arm DNA, and 3'-flap substrates. In vitro, on its own, strongly binds ssDNA oligomers and weakly fsDNA, but does not bind to dsDNA. The polypeptide is Fanconi anemia group M protein (FANCM) (Gallus gallus (Chicken)).